Consider the following 2147-residue polypeptide: Large tegument protein deneddylase (2147 aa).

The deubiquitination activity stretch occupies residues 1-233 (MKIVRASRDQ…PDIDASVMSG (233 aa)). Positions 3–223 (IVRASRDQSA…LVQIMDQYKD (221 aa)) constitute a Peptidase C76 domain. Catalysis depends on residues C23, D156, and H158. Disordered regions lie at residues 228–301 (ASVM…RSRR), 1419–1438 (EIGQ…GLPE), 1567–1589 (SSSS…QNAT), and 2034–2072 (RDPP…SLSE). Residues 240 to 261 (SISSSAASASASVSPLPSGAAS) show a composition bias toward low complexity. Position 292 (T292) is a region of interest, interaction with inner tegument protein. Residues 2052-2061 (AEDRDPDARP) show a composition bias toward basic and acidic residues.

This sequence belongs to the herpesviridae large tegument protein family. In terms of assembly, interacts with host CUL1 and CUL4A; these interactions inhibit the E3 ligase activity of cullins. Interacts with inner tegument protein. Interacts with capsid vertex specific component CVC2. Interacts with the major capsid protein/MCP.

The protein localises to the virion tegument. It is found in the host cytoplasm. Its subcellular location is the host nucleus. The enzyme catalyses Thiol-dependent hydrolysis of ester, thioester, amide, peptide and isopeptide bonds formed by the C-terminal Gly of ubiquitin (a 76-residue protein attached to proteins as an intracellular targeting signal).. Large tegument protein that plays multiple roles in the viral cycle. During viral entry, remains associated with the capsid while most of the tegument is detached and participates in the capsid transport toward the host nucleus. Plays a role in the routing of the capsid at the nuclear pore complex and subsequent uncoating. Within the host nucleus, acts as a deneddylase and promotes the degradation of nuclear CRLs (cullin-RING ubiquitin ligases) and thereby stabilizes nuclear CRL substrates, while cytoplasmic CRLs remain unaffected. These modifications prevent host cell cycle S-phase progression and create a favorable environment allowing efficient viral genome replication. Participates later in the secondary envelopment of capsids. Indeed, plays a linker role for the association of the outer viral tegument to the capsids together with the inner tegument protein. In Mus musculus (Mouse), this protein is Large tegument protein deneddylase (M48).